Consider the following 333-residue polypeptide: NADH-quinone oxidoreductase subunit H (333 aa).

The next 8 helical transmembrane spans lie at 15–35, 88–108, 117–137, 159–179, 191–211, 239–259, 274–296, and 313–333; these read FFIF…FVTY, FILA…VIPF, IGVG…GVVT, ISYE…AGSL, VWYI…AVAE, WAFF…LITV, IPGA…WFRV, and VLLP…ELFF.

It belongs to the complex I subunit 1 family. As to quaternary structure, NDH-1 is composed of 14 different subunits. Subunits NuoA, H, J, K, L, M, N constitute the membrane sector of the complex.

It is found in the cell membrane. The catalysed reaction is a quinone + NADH + 5 H(+)(in) = a quinol + NAD(+) + 4 H(+)(out). Its function is as follows. NDH-1 shuttles electrons from NADH, via FMN and iron-sulfur (Fe-S) centers, to quinones in the respiratory chain. The immediate electron acceptor for the enzyme in this species is believed to be ubiquinone. Couples the redox reaction to proton translocation (for every two electrons transferred, four hydrogen ions are translocated across the cytoplasmic membrane), and thus conserves the redox energy in a proton gradient. This subunit may bind ubiquinone. This Bacillus anthracis (strain A0248) protein is NADH-quinone oxidoreductase subunit H.